A 404-amino-acid chain; its full sequence is Cysteine desulfurase IscS (404 aa).

Residues 75-76 (AT), asparagine 155, glutamine 183, and 203-205 (SAH) contribute to the pyridoxal 5'-phosphate site. An N6-(pyridoxal phosphate)lysine modification is found at lysine 206. Residue threonine 243 coordinates pyridoxal 5'-phosphate. The active-site Cysteine persulfide intermediate is cysteine 328. Cysteine 328 is a binding site for [2Fe-2S] cluster.

This sequence belongs to the class-V pyridoxal-phosphate-dependent aminotransferase family. NifS/IscS subfamily. Homodimer. Forms a heterotetramer with IscU, interacts with other sulfur acceptors. The cofactor is pyridoxal 5'-phosphate.

The protein resides in the cytoplasm. It catalyses the reaction (sulfur carrier)-H + L-cysteine = (sulfur carrier)-SH + L-alanine. It functions in the pathway cofactor biosynthesis; iron-sulfur cluster biosynthesis. In terms of biological role, master enzyme that delivers sulfur to a number of partners involved in Fe-S cluster assembly, tRNA modification or cofactor biosynthesis. Catalyzes the removal of elemental sulfur atoms from cysteine to produce alanine. Functions as a sulfur delivery protein for Fe-S cluster synthesis onto IscU, an Fe-S scaffold assembly protein, as well as other S acceptor proteins. This is Cysteine desulfurase IscS from Pseudomonas putida (strain W619).